A 162-amino-acid chain; its full sequence is Nitric oxide synthase, inducible (162 aa).

Over residues 24–37 the composition is skewed to polar residues; sequence LQYHSLSKQQNESP. A disordered region spans residues 24–65; that stretch reads LQYHSLSKQQNESPQPLVGTGKKSPESLVKPDATPLSSPRHV. Zn(2+)-binding residues include Cys90 and Cys95. Ser98 contributes to the (6R)-L-erythro-5,6,7,8-tetrahydrobiopterin binding site. Glu132 contacts L-arginine. His160 is an FAD binding site.

This sequence belongs to the NOS family. As to quaternary structure, homodimer. Interacts with NHERF1. Interacts with GAPDH; induced by oxidatively-modified low-densitity lipoprotein (LDL(ox)). Interacts with S100A8 and S100A9 to form the iNOS-S100A8/9 transnitrosylase complex. Interacts with SPSB1, SPSB2 and SPSB4. Interacts with ELOC and CUL5 in the presence of SPSB1 or SPSB2 or SPSB4. Forms a complex with ASL, ASS1 and HSP90AA1; the complex regulates cell-autonomous L-arginine synthesis and citrulline recycling while channeling extracellular L-arginine to nitric oxide synthesis pathway. Heme b serves as cofactor. It depends on FAD as a cofactor. Requires FMN as cofactor. The cofactor is (6R)-L-erythro-5,6,7,8-tetrahydrobiopterin. Polyubiquitinated; mediated by SPSB1, SPSB2 and SPSB4, leading to proteasomal degradation.

It localises to the cytoplasm. The protein localises to the cytosol. It catalyses the reaction 2 L-arginine + 3 NADPH + 4 O2 + H(+) = 2 L-citrulline + 2 nitric oxide + 3 NADP(+) + 4 H2O. Regulated by calcium/calmodulin. Functionally, produces nitric oxide (NO) which is a messenger molecule with diverse functions throughout the body. In macrophages, NO mediates tumoricidal and bactericidal actions. Also has nitrosylase activity and mediates cysteine S-nitrosylation of cytoplasmic target proteins such PTGS2/COX2. As component of the iNOS-S100A8/9 transnitrosylase complex involved in the selective inflammatory stimulus-dependent S-nitrosylation of GAPDH implicated in regulation of the GAIT complex activity and probably multiple targets including ANXA5, EZR, MSN and VIM. Involved in inflammation, enhances the synthesis of pro-inflammatory mediators such as IL6 and IL8. The sequence is that of Nitric oxide synthase, inducible (NOS2) from Macaca mulatta (Rhesus macaque).